The sequence spans 216 residues: Holliday junction branch migration complex subunit RuvA (216 aa).

The interval 1–64 (MISFIKGVLI…EDAQQLYGFK (64 aa)) is domain I. The domain II stretch occupies residues 65–143 (SKVDKKVFQE…KMANEIYAQT (79 aa)). The tract at residues 144 to 163 (SGTTTTSQDSQAQQAPTSVV) is flexible linker. The interval 164-216 (LANSIFNESVDALLALGYKQKDAEKMARSAMGDATTAAEVIRKALQGSIKSKG) is domain III.

It belongs to the RuvA family. As to quaternary structure, homotetramer. Forms an RuvA(8)-RuvB(12)-Holliday junction (HJ) complex. HJ DNA is sandwiched between 2 RuvA tetramers; dsDNA enters through RuvA and exits via RuvB. An RuvB hexamer assembles on each DNA strand where it exits the tetramer. Each RuvB hexamer is contacted by two RuvA subunits (via domain III) on 2 adjacent RuvB subunits; this complex drives branch migration. In the full resolvosome a probable DNA-RuvA(4)-RuvB(12)-RuvC(2) complex forms which resolves the HJ.

It is found in the cytoplasm. The RuvA-RuvB-RuvC complex processes Holliday junction (HJ) DNA during genetic recombination and DNA repair, while the RuvA-RuvB complex plays an important role in the rescue of blocked DNA replication forks via replication fork reversal (RFR). RuvA specifically binds to HJ cruciform DNA, conferring on it an open structure. The RuvB hexamer acts as an ATP-dependent pump, pulling dsDNA into and through the RuvAB complex. HJ branch migration allows RuvC to scan DNA until it finds its consensus sequence, where it cleaves and resolves the cruciform DNA. The protein is Holliday junction branch migration complex subunit RuvA of Francisella tularensis subsp. holarctica (strain FTNF002-00 / FTA).